A 1809-amino-acid polypeptide reads, in one-letter code: Proprotein convertase subtilisin/kexin type 5 (1809 aa).

Residues 1–34 (MDWGWGSRCCRPGRRDLLCVLALLAGCLLPVCRT) form the signal peptide. Residues 35–116 (RVYTNHWAVK…QQVVKKRTKR (82 aa)) constitute a propeptide that is removed on maturation. Residues 117 to 1700 (DYDLSRAQST…DTVFHEHTKT (1584 aa)) lie on the Extracellular side of the membrane. Residues 136-455 (MWYMHCSDNT…FGLMDAEAMV (320 aa)) enclose the Peptidase S8 domain. Active-site charge relay system residues include Asp-173 and His-214. N-linked (GlcNAc...) asparagine glycosylation is found at Asn-227 and Asn-383. Catalysis depends on Ser-388, which acts as the Charge relay system. The 141-residue stretch at 463 to 603 (TVPQQHVCVE…SLVLYGTSVQ (141 aa)) folds into the P/Homo B domain. The short motif at 521–523 (RGD) is the Cell attachment site element. FU repeat units lie at residues 632 to 682 (EDYA…GHFH), 685 to 732 (KKRC…GSYQ), 736 to 779 (KNIC…GQFF), 781 to 826 (GHDC…SYYL), 834 to 881 (YKSC…GEYI), 884 to 929 (QGHC…WKFE), 931 to 964 (KKQC…QDSE), 965 to 1010 (YGEC…KTFG), 1012 to 1054 (KWEC…GFYG), 1058 to 1099 (LGEC…PTWP), 1137 to 1179 (TRQY…GTWL), 1183 to 1230 (SSSC…GFYA), 1232 to 1276 (DGVC…KHVA), 1278 to 1321 (EGVC…NFYP), 1323 to 1369 (MRQC…GTYK), 1373 to 1418 (NDEC…IEYW), 1422 to 1467 (SHRC…GYHT), 1471 to 1516 (SHQC…GYYG), 1520 to 1567 (SGRC…HYYA), 1571 to 1616 (AQTC…GEYR), and 1622 to 1669 (NFNC…SHPH). The CRM (Cys-rich motif) stretch occupies residues 638 to 1685 (CDPECSEVGC…DCQSSTDECI (1048 aa)). Asn-667 is a glycosylation site (N-linked (GlcNAc...) asparagine). Residues Asn-754, Asn-804, and Asn-854 are each glycosylated (N-linked (GlcNAc...) asparagine). Asn-1642 and Asn-1664 each carry an N-linked (GlcNAc...) asparagine glycan. A helical transmembrane segment spans residues 1701–1721 (ALLVTSGAMLLLLLGAAVVVW). At 1722–1809 (RKSRSQPVAK…EYDDESYSYQ (88 aa)) the chain is on the cytoplasmic side. AC regions lie at residues 1757–1776 (VIEY…IVYM) and 1788–1809 (YGLL…YSYQ).

This sequence belongs to the peptidase S8 family. In terms of tissue distribution, expressed in the intestine, brain, adrenal gland, anterior pituitary, thyroid, ovaries, testis and lung. Highest levels are found in the gut, duodenum, jejunum and ileum. Expression is higher in female than in male reproductive organs.

The protein localises to the secreted. Its subcellular location is the endomembrane system. Its function is as follows. Serine endoprotease that processes various proproteins by cleavage at paired basic amino acids, recognizing the RXXX[KR]R consensus motif. Likely functions in the constitutive and regulated secretory pathways. Plays an essential role in pregnancy establishment by proteolytic activation of a number of important factors such as BMP2, CALD1 and alpha-integrins. May be responsible for the maturation of gastrointestinal peptides. May be involved in the cellular proliferation of adrenal cortex via the activation of growth factors. This is Proprotein convertase subtilisin/kexin type 5 (Pcsk5) from Rattus norvegicus (Rat).